Consider the following 1145-residue polypeptide: MASNNHFMNSRSNLSTNSDAAEAERHQQPVSNSVTFARRTPSGRYVNYSRDDLDSELGSVDLTGYSVHIPPTPDNQPMDPSISQKVEEQYVSNSLFTGGFNSVTRAHLMEKVIDTETSHPQMAGAKGSSCAVPGCDVKVMSDERGQDLLPCECDFKICRDCFMDAVKTGGMCPGCKEPYRNTDLADFADNNKQQRPMLPPPAGGSKMDRRLSLMKSTKSGLMRSQTGDFDHNRWLFETSGTYGFGNAFWTKDGNFGSDKDGNGHGMGPQDLMSRPWRPLTRKLQIPAAVISPYRLLILIRIVVLALFLMWRIKHKNPDAIWLWGMSVVCELWFALSWLLDQLPKLCPINRATDLNVLKEKFETPTPSNPTGKSDLPGLDMFVSTADPEKEPPLVTSNTILSILAADYPVEKLACYVSDDGGALLTFEAMAEAASFANMWVPFCRKHNIEPRNPDSYFSLKRDPYKNKVKADFVKDRRRVKREYDEFKVRINSLPDSIRRRSDAYHAREEIKAMKLQRQNRDEEIVEPVKIPKATWMADGTHWPGTWINSGPDHSRSDHAGIIQVMLKPPSDEPLHGVSEGFLDLTDVDIRLPLLVYVSREKRPGYDHNKKAGAMNALVRASAIMSNGPFILNLDCDHYIYNSQALREGMCFMMDRGGDRLCYVQFPQRFEGIDPSDRYANHNTVFFDVNMRALDGLMGPVYVGTGCLFRRIALYGFDPPRAKEHHPGFCSCCFSRKKKKSRVPEENRSLRMGGDSDDDEEMNLSLVPKKFGNSTFLIDSIPVAEFQGRPLADHPAVQNGRPPGALTIPRELLDASTVAEAIAVISCWYEDKTEWGSRIGWIYGSVTEDVVTGYRMHNRGWKSVYCVTKRDAFRGTAPINLTDRLHQVLRWATGSVEIFFSRNNAFFASPRMKILQRIAYLNVGIYPFTSFFLIVYCFLPALSLFSGQFIVQTLNVTFLVYLLIISITLCLLALLEIKWSGISLEEWWRNEQFWLIGGTSAHLAAVIQGLLKVVAGIEISFTLTSKSGGEDVDDEFADLYIVKWTSLMIPPITIMMVNLIAIAVGFSRTIYSVIPQWSKLIGGVFFSFWVLAHLYPFAKGLMGRRGRTPTIVYVWSGLVAITISLLWVAINPPAGSTQIGGSFTFP.

Residues 1–19 are compositionally biased toward polar residues; sequence MASNNHFMNSRSNLSTNSD. Disordered stretches follow at residues 1–38 and 189–208; these read MASNNHFMNSRSNLSTNSDAAEAERHQQPVSNSVTFAR and DNNKQQRPMLPPPAGGSKMD. A run of 2 helical transmembrane segments spans residues 289 to 309 and 319 to 339; these read VISPYRLLILIRIVVLALFLM and AIWLWGMSVVCELWFALSWLL. Asp419 is an active-site residue. At Ser755 the chain carries Phosphoserine. Asp848 is a catalytic residue. Helical transmembrane passes span 930 to 950, 956 to 976, 1002 to 1022, 1045 to 1065, 1079 to 1099, and 1109 to 1129; these read FFLIVYCFLPALSLFSGQFIV, TFLVYLLIISITLCLLALLEI, LAAVIQGLLKVVAGIEISFTL, SLMIPPITIMMVNLIAIAVGF, LIGGVFFSFWVLAHLYPFAKG, and TIVYVWSGLVAITISLLWVAI.

It belongs to the glycosyltransferase 2 family. Plant cellulose synthase-like D subfamily. As to expression, preferentially expressed in root hair cells. Expressed in roots, leaves, stems, flowers and siliques.

The protein localises to the golgi apparatus membrane. Functionally, thought to be a Golgi-localized beta-glycan synthase that polymerize the backbones of noncellulosic polysaccharides (hemicelluloses) of plant cell wall. Required for synthesis of a cell wall polysaccharide essential for root hair elongation, but not initiation. May be the functional ortholog of rice CSLD1. This chain is Cellulose synthase-like protein D3 (CSLD3), found in Arabidopsis thaliana (Mouse-ear cress).